A 269-amino-acid polypeptide reads, in one-letter code: Phosphonoacetaldehyde hydrolase (269 aa).

Asp-10 functions as the Nucleophile in the catalytic mechanism. 2 residues coordinate Mg(2+): Asp-10 and Ala-12. The Schiff-base intermediate with substrate role is filled by Lys-52. Position 186 (Asp-186) interacts with Mg(2+).

This sequence belongs to the HAD-like hydrolase superfamily. PhnX family. As to quaternary structure, homodimer. Requires Mg(2+) as cofactor.

The catalysed reaction is phosphonoacetaldehyde + H2O = acetaldehyde + phosphate + H(+). Functionally, involved in phosphonate degradation. The chain is Phosphonoacetaldehyde hydrolase (phnX) from Salmonella typhimurium (strain LT2 / SGSC1412 / ATCC 700720).